Consider the following 389-residue polypeptide: Phospho-N-acetylmuramoyl-pentapeptide-transferase (389 aa).

Transmembrane regions (helical) follow at residues 25-45 (RAVMATITALGIGLVCGPWVI), 73-93 (TMGGVLILIGIAVATLLWGDL), 97-117 (FIWIVMLVTFGFGVIGWVDDY), 135-155 (FWQSVIGLFAAVYLAFSVSEA), 190-210 (ISYPLGVWGFIVLTYFVIVGA), 222-242 (GLVIMPVVLVGASLGVFAYVM), 258-278 (GAGELLIFCSAMGGAGLAFLW), 286-306 (VFMGDVGALALGGALGTVAVI), 311-331 (IVLFIMGGIFVAETLSVMLQV), and 366-386 (QVVVRFWIITLMLCLFGLTTL).

The protein belongs to the glycosyltransferase 4 family. MraY subfamily. Mg(2+) is required as a cofactor.

It is found in the cell inner membrane. The catalysed reaction is UDP-N-acetyl-alpha-D-muramoyl-L-alanyl-gamma-D-glutamyl-meso-2,6-diaminopimeloyl-D-alanyl-D-alanine + di-trans,octa-cis-undecaprenyl phosphate = di-trans,octa-cis-undecaprenyl diphospho-N-acetyl-alpha-D-muramoyl-L-alanyl-D-glutamyl-meso-2,6-diaminopimeloyl-D-alanyl-D-alanine + UMP. Its pathway is cell wall biogenesis; peptidoglycan biosynthesis. Catalyzes the initial step of the lipid cycle reactions in the biosynthesis of the cell wall peptidoglycan: transfers peptidoglycan precursor phospho-MurNAc-pentapeptide from UDP-MurNAc-pentapeptide onto the lipid carrier undecaprenyl phosphate, yielding undecaprenyl-pyrophosphoryl-MurNAc-pentapeptide, known as lipid I. The polypeptide is Phospho-N-acetylmuramoyl-pentapeptide-transferase (Burkholderia cenocepacia (strain HI2424)).